We begin with the raw amino-acid sequence, 186 residues long: Elongation factor P (186 aa).

Belongs to the elongation factor P family.

The protein localises to the cytoplasm. Its pathway is protein biosynthesis; polypeptide chain elongation. Functionally, involved in peptide bond synthesis. Stimulates efficient translation and peptide-bond synthesis on native or reconstituted 70S ribosomes in vitro. Probably functions indirectly by altering the affinity of the ribosome for aminoacyl-tRNA, thus increasing their reactivity as acceptors for peptidyl transferase. The polypeptide is Elongation factor P (Pelagibacter ubique (strain HTCC1062)).